The chain runs to 363 residues: Mitogen-activated protein kinase 4 (363 aa).

The 289-residue stretch at 30-318 folds into the Protein kinase domain; the sequence is YDLVKVVGFG…AKQVMEHPYF (289 aa). ATP-binding positions include 36 to 44 and Lys-59; that span reads VGFGACGTV. Asp-156 (proton acceptor) is an active-site residue. 2 positions are modified to phosphoserine: Ser-186 and Ser-187. A Phosphothreonine; by MKK5 modification is found at Thr-190. The TQY motif lies at 190 to 192; it reads TQY. Tyr-192 carries the phosphotyrosine; by MKK5 modification.

The protein belongs to the protein kinase superfamily. CMGC Ser/Thr protein kinase family. MAP kinase subfamily. Mg(2+) is required as a cofactor. Post-translationally, dually phosphorylated on Thr-190 and Tyr-192, which activates the enzyme.

It catalyses the reaction L-seryl-[protein] + ATP = O-phospho-L-seryl-[protein] + ADP + H(+). The catalysed reaction is L-threonyl-[protein] + ATP = O-phospho-L-threonyl-[protein] + ADP + H(+). Essential for the two main proliferating life stages, the promastigotes and amastigotes, of the parasite. This is Mitogen-activated protein kinase 4 from Leishmania mexicana.